Reading from the N-terminus, the 435-residue chain is U-box domain-containing protein 21 (435 aa).

In terms of domain architecture, U-box spans 30-104; it reads TIPPEFQCPI…QGWCVEKGSP (75 aa). ARM repeat units lie at residues 202–241, 245–285, 288–327, and 329–369; these read LEGISKLASATSFRCVAGLLKSTDDSVRQNAAFIMKEILS, TRVH…QMVL, PEIASEFLEIGLVSITVEMIVDAENSVCEKALAVLDAICE, and EHGR…KLWK.

It catalyses the reaction S-ubiquitinyl-[E2 ubiquitin-conjugating enzyme]-L-cysteine + [acceptor protein]-L-lysine = [E2 ubiquitin-conjugating enzyme]-L-cysteine + N(6)-ubiquitinyl-[acceptor protein]-L-lysine.. It participates in protein modification; protein ubiquitination. Functions as an E3 ubiquitin ligase. In Arabidopsis thaliana (Mouse-ear cress), this protein is U-box domain-containing protein 21 (PUB21).